The following is a 250-amino-acid chain: Aquaporin TIP1-1 (250 aa).

2 helical membrane passes run 24–44 (FAEF…GMAF) and 56–76 (AGLI…VSVG). The NPA 1 motif lies at 85–87 (NPA). 3 helical membrane-spanning segments follow: residues 104–126 (LLYW…FSTG), 143–163 (ALVL…ATAV), and 172–192 (TIAP…GGAF). An NPA 2 motif is present at residues 198–200 (NPA). A helical transmembrane segment spans residues 218 to 238 (YWVGPLIGGGLAGVIYELLFI).

The protein belongs to the MIP/aquaporin (TC 1.A.8) family. TIP (TC 1.A.8.10) subfamily. As to expression, expressed in roots, shoots, leaves, tassels, ears and embryos. Expressed in meristems and zones of cell enlargement: tips of primary and lateral roots, leaf primordia, and male and female inflorescence meristems. Highly expressed in the root epidermis and endodermis, parenchyma cells surrounding mature xylem vessels in the root and the stem, phloem companion cells and a ring of cells around the phloem strand in the stem and the leaf sheath, and the basal endosperm transfer cells in developing kernels.

The protein localises to the vacuole membrane. Its function is as follows. Water channel required to facilitate the transport of water across cell membrane. May support the rapid influx of water into vacuoles during cell expansion, permit osmotic equilibration between the cytosol and the vacuolar content and rapid transcellular water flow through living cells. Its function is impaired by Hg(2+). In Zea mays (Maize), this protein is Aquaporin TIP1-1 (TIP1-1).